We begin with the raw amino-acid sequence, 156 residues long: tRNA (cytidine(34)-2'-O)-methyltransferase (156 aa).

S-adenosyl-L-methionine is bound by residues Gly102, Leu124, and Ser132.

Belongs to the class IV-like SAM-binding methyltransferase superfamily. RNA methyltransferase TrmH family. TrmL subfamily. As to quaternary structure, homodimer.

The protein localises to the cytoplasm. The catalysed reaction is cytidine(34) in tRNA + S-adenosyl-L-methionine = 2'-O-methylcytidine(34) in tRNA + S-adenosyl-L-homocysteine + H(+). It carries out the reaction 5-carboxymethylaminomethyluridine(34) in tRNA(Leu) + S-adenosyl-L-methionine = 5-carboxymethylaminomethyl-2'-O-methyluridine(34) in tRNA(Leu) + S-adenosyl-L-homocysteine + H(+). Functionally, methylates the ribose at the nucleotide 34 wobble position in the two leucyl isoacceptors tRNA(Leu)(CmAA) and tRNA(Leu)(cmnm5UmAA). Catalyzes the methyl transfer from S-adenosyl-L-methionine to the 2'-OH of the wobble nucleotide. This Burkholderia pseudomallei (strain 1106a) protein is tRNA (cytidine(34)-2'-O)-methyltransferase.